We begin with the raw amino-acid sequence, 304 residues long: Quinolinate synthase (304 aa).

His23 and Ser40 together coordinate iminosuccinate. Cys86 lines the [4Fe-4S] cluster pocket. Residues 112–114 (YVN) and Ser129 each bind iminosuccinate. Cys173 lines the [4Fe-4S] cluster pocket. Iminosuccinate is bound by residues 199-201 (HPE) and Thr216. Cys260 provides a ligand contact to [4Fe-4S] cluster.

This sequence belongs to the quinolinate synthase family. Type 2 subfamily. The cofactor is [4Fe-4S] cluster.

It is found in the cytoplasm. The catalysed reaction is iminosuccinate + dihydroxyacetone phosphate = quinolinate + phosphate + 2 H2O + H(+). It participates in cofactor biosynthesis; NAD(+) biosynthesis; quinolinate from iminoaspartate: step 1/1. In terms of biological role, catalyzes the condensation of iminoaspartate with dihydroxyacetone phosphate to form quinolinate. This chain is Quinolinate synthase, found in Methanothermobacter thermautotrophicus (strain ATCC 29096 / DSM 1053 / JCM 10044 / NBRC 100330 / Delta H) (Methanobacterium thermoautotrophicum).